The following is a 31-amino-acid chain: Photosystem II reaction center protein T (31 aa).

The chain crosses the membrane as a helical span at residues 3–23; that stretch reads ALVYTFLLVGTLGIIFFSIFF.

It belongs to the PsbT family. As to quaternary structure, PSII is composed of 1 copy each of membrane proteins PsbA, PsbB, PsbC, PsbD, PsbE, PsbF, PsbH, PsbI, PsbJ, PsbK, PsbL, PsbM, PsbT, PsbY, PsbZ, Psb30/Ycf12, at least 3 peripheral proteins of the oxygen-evolving complex and a large number of cofactors. It forms dimeric complexes.

Its subcellular location is the plastid. It localises to the chloroplast thylakoid membrane. In terms of biological role, found at the monomer-monomer interface of the photosystem II (PS II) dimer, plays a role in assembly and dimerization of PSII. PSII is a light-driven water plastoquinone oxidoreductase, using light energy to abstract electrons from H(2)O, generating a proton gradient subsequently used for ATP formation. In Bigelowiella natans (Pedinomonas minutissima), this protein is Photosystem II reaction center protein T.